We begin with the raw amino-acid sequence, 68 residues long: Defensin gallicin (68 aa).

The signal sequence occupies residues 1 to 16; sequence MWIESDAGVAIDRHAR.

In terms of processing, contains 5 disulfide bonds. In terms of tissue distribution, expressed in hemolymph, gills, digestive gland, foot, adductor muscles and mantle.

Its subcellular location is the secreted. The protein resides in the target cell membrane. Shows antibacterial activity against numerous Gram-positive bacteria. It selectively inhibits peptidoglycan biosynthesis through complex formation with the cell wall precursor lipid II (1:1 molar ratio) thus inhibiting cell wall synthesis. This chain is Defensin gallicin, found in Mytilus galloprovincialis (Mediterranean mussel).